A 214-amino-acid polypeptide reads, in one-letter code: RNA-free ribonuclease P (214 aa).

It belongs to the HARP family.

It catalyses the reaction Endonucleolytic cleavage of RNA, removing 5'-extranucleotides from tRNA precursor.. Functionally, RNA-free RNase P that catalyzes the removal of the 5'-leader sequence from pre-tRNA to produce the mature 5'-terminus. This is RNA-free ribonuclease P from Aeropyrum pernix (strain ATCC 700893 / DSM 11879 / JCM 9820 / NBRC 100138 / K1).